A 189-amino-acid chain; its full sequence is GTP cyclohydrolase 1 (189 aa).

Residues C78, H81, and C150 each coordinate Zn(2+).

This sequence belongs to the GTP cyclohydrolase I family. In terms of assembly, homomer.

The enzyme catalyses GTP + H2O = 7,8-dihydroneopterin 3'-triphosphate + formate + H(+). It participates in cofactor biosynthesis; 7,8-dihydroneopterin triphosphate biosynthesis; 7,8-dihydroneopterin triphosphate from GTP: step 1/1. The protein is GTP cyclohydrolase 1 of Bacillus mycoides (strain KBAB4) (Bacillus weihenstephanensis).